A 155-amino-acid chain; its full sequence is Eosinophil cationic protein (155 aa).

The signal sequence occupies residues 1–25 (MGLKLLESRLCLLLSLGLVLMLASC). His-38 serves as the catalytic Proton acceptor. 4 cysteine pairs are disulfide-bonded: Cys-47–Cys-106, Cys-61–Cys-118, Cys-79–Cys-133, and Cys-86–Cys-94. 62–66 (KDINT) contacts substrate. Asn-88 and Asn-107 each carry an N-linked (GlcNAc...) asparagine glycan. The active-site Proton donor is His-150.

It belongs to the pancreatic ribonuclease family.

It localises to the cytoplasmic granule. In terms of biological role, cytotoxin and helminthotoxin with ribonuclease activity. Possesses a wide variety of biological activities. This chain is Eosinophil cationic protein (Rnase3), found in Rattus norvegicus (Rat).